A 63-amino-acid chain; its full sequence is Large ribosomal subunit protein uL29 (63 aa).

The protein belongs to the universal ribosomal protein uL29 family.

This Tolumonas auensis (strain DSM 9187 / NBRC 110442 / TA 4) protein is Large ribosomal subunit protein uL29.